The sequence spans 243 residues: DNA repair protein RecO (243 aa).

Belongs to the RecO family.

In terms of biological role, involved in DNA repair and RecF pathway recombination. The chain is DNA repair protein RecO from Xylella fastidiosa (strain M12).